The primary structure comprises 452 residues: Probable diguanylate cyclase DgcT (452 aa).

Over 1 to 7 (MEKDYLR) the chain is Cytoplasmic. The chain crosses the membrane as a helical span at residues 8 to 28 (ISSTVLVSLLFGLALVLVNSW). Residues 29–45 (FNQPGVEEVVPRSTYLM) are Periplasmic-facing. The helical transmembrane segment at 46–66 (VMIALFFIDTVAFIFMQLYFI) threads the bilayer. Over 67 to 74 (YDRRQFSN) the chain is Cytoplasmic. A helical membrane pass occupies residues 75-95 (CVLSLAFLSCLIYFVITVIII). Residues 96 to 111 (QQIIEERLTSSVVQND) lie on the Periplasmic side of the membrane. Residues 112–132 (IAIYYLFRQMSLCILIFLALV) form a helical membrane-spanning segment. Residues 133 to 148 (NKVSENTKQRNLFSKK) lie on the Cytoplasmic side of the membrane. The helical transmembrane segment at 149 to 169 (MTLCISLFFVFGGPIVAHILS) threads the bilayer. Residues 170–195 (SHYESYNLHIAELTNENGQVVWKASY) are Periplasmic-facing. Residues 196 to 216 (VTIMIFMWLTLLSVNLYFNGL) traverse the membrane as a helical segment. The Cytoplasmic segment spans residues 217–219 (RYD). A helical membrane pass occupies residues 220 to 240 (IWNGVTVIAFCAVLYNISLLF). At 241 to 254 (MSRYSVSTWYISRT) the chain is on the periplasmic side. Residues 255–275 (IEVVSKLTVMVIFMCHIFSAL) form a helical membrane-spanning segment. The Cytoplasmic portion of the chain corresponds to 276-452 (RVTKNIAHRD…RDVVNFCESP (177 aa)). The GGDEF domain occupies 310–445 (TPYCVMIMDI…GRNKVVVRDV (136 aa)). Asp-318 and Ile-319 together coordinate Mg(2+). Substrate contacts are provided by Asn-326, His-331, and Asp-335. Residue Glu-361 participates in Mg(2+) binding. The active-site Proton acceptor is Glu-361. Substrate is bound at residue Arg-381.

In terms of assembly, homodimer. The cofactor is Mg(2+).

It localises to the cell inner membrane. The catalysed reaction is 2 GTP = 3',3'-c-di-GMP + 2 diphosphate. It participates in purine metabolism; 3',5'-cyclic di-GMP biosynthesis. In terms of biological role, probably catalyzes the synthesis of cyclic-di-GMP (c-di-GMP) via the condensation of 2 GTP molecules. Overexpression leads to a strong repression of swimming; swimming returns to normal when residues 359-360 are both mutated to Ala. Overexpression also leads to a 20-fold increase in c-di-GMP levels in vivo. Cyclic-di-GMP is a second messenger which controls cell surface-associated traits in bacteria. The chain is Probable diguanylate cyclase DgcT from Escherichia coli (strain K12).